The following is a 386-amino-acid chain: Arginine biosynthesis bifunctional protein ArgJ (386 aa).

Thr148, Lys170, Thr181, Glu261, Asn381, and Ser386 together coordinate substrate. Thr181 (nucleophile) is an active-site residue.

It belongs to the ArgJ family. In terms of assembly, heterotetramer of two alpha and two beta chains.

It is found in the cytoplasm. The enzyme catalyses N(2)-acetyl-L-ornithine + L-glutamate = N-acetyl-L-glutamate + L-ornithine. The catalysed reaction is L-glutamate + acetyl-CoA = N-acetyl-L-glutamate + CoA + H(+). It participates in amino-acid biosynthesis; L-arginine biosynthesis; L-ornithine and N-acetyl-L-glutamate from L-glutamate and N(2)-acetyl-L-ornithine (cyclic): step 1/1. It functions in the pathway amino-acid biosynthesis; L-arginine biosynthesis; N(2)-acetyl-L-ornithine from L-glutamate: step 1/4. Catalyzes two activities which are involved in the cyclic version of arginine biosynthesis: the synthesis of N-acetylglutamate from glutamate and acetyl-CoA as the acetyl donor, and of ornithine by transacetylation between N(2)-acetylornithine and glutamate. This is Arginine biosynthesis bifunctional protein ArgJ from Corynebacterium diphtheriae (strain ATCC 700971 / NCTC 13129 / Biotype gravis).